Here is a 528-residue protein sequence, read N- to C-terminus: Peptide chain release factor 3 (528 aa).

One can recognise a tr-type G domain in the interval 10–280 (AKRRTFGIIS…IDMAPAPGPR (271 aa)). Residues 19–26 (SHPDAGKT), 87–91 (DTPGH), and 141–144 (NKLD) contribute to the GTP site.

This sequence belongs to the TRAFAC class translation factor GTPase superfamily. Classic translation factor GTPase family. PrfC subfamily.

It localises to the cytoplasm. Increases the formation of ribosomal termination complexes and stimulates activities of RF-1 and RF-2. It binds guanine nucleotides and has strong preference for UGA stop codons. It may interact directly with the ribosome. The stimulation of RF-1 and RF-2 is significantly reduced by GTP and GDP, but not by GMP. This is Peptide chain release factor 3 from Desulfotalea psychrophila (strain LSv54 / DSM 12343).